The sequence spans 238 residues: MRPTGRSAQQVRPLTFTRHYTKHAEGSVLVEFGDTKVLCNATVEEGVPRFLKGQGQGWVTAEYGMLPRATHSRNAREAAKGKQGGRTLEIQRLIARSLRAAIDLKVLGEYTITLDCDVLQADGGTRTASITGACVALADALNQMVANGKLKKNPMKGMVAAVSVGIVKGEALCDLEYVEDSAAETDMNVVMTEDGRMVEVQGTAEGEPFSHEELLTLLALARGGIDTIVQAQKAALAD.

Residues Arg-86 and 124–126 (GTR) each bind phosphate.

Belongs to the RNase PH family. In terms of assembly, homohexameric ring arranged as a trimer of dimers.

The enzyme catalyses tRNA(n+1) + phosphate = tRNA(n) + a ribonucleoside 5'-diphosphate. Phosphorolytic 3'-5' exoribonuclease that plays an important role in tRNA 3'-end maturation. Removes nucleotide residues following the 3'-CCA terminus of tRNAs; can also add nucleotides to the ends of RNA molecules by using nucleoside diphosphates as substrates, but this may not be physiologically important. Probably plays a role in initiation of 16S rRNA degradation (leading to ribosome degradation) during starvation. This is Ribonuclease PH from Pectobacterium atrosepticum (strain SCRI 1043 / ATCC BAA-672) (Erwinia carotovora subsp. atroseptica).